A 776-amino-acid polypeptide reads, in one-letter code: U3 small nucleolar RNA-associated protein 4 (776 aa).

WD repeat units follow at residues 35–40, 132–169, 178–214, 230–266, 271–308, and 417–452; these read RCRFVD, LPLR…VLID, EHDT…RIWS, KVDK…KFWD, TLNQ…FQFS, and VCKL…KVFH.

As to quaternary structure, interacts with snoRNA U3. Interacts with MPP10. Component of the ribosomal small subunit (SSU) processome composed of at least 40 protein subunits and snoRNA U3. In the absence of snoRNA3, forms a complex with other t-UTPs. This complex can associate with pre-18S ribosomal RNAs.

It localises to the nucleus. Its subcellular location is the nucleolus. In terms of biological role, involved in nucleolar processing of pre-18S ribosomal RNA. Required for optimal pre-ribosomal RNA transcription by RNA polymerase I together with a subset of U3 proteins required for transcription (t-UTPs). The protein is U3 small nucleolar RNA-associated protein 4 (UTP4) of Saccharomyces cerevisiae (strain ATCC 204508 / S288c) (Baker's yeast).